The sequence spans 224 residues: Pyridoxine/pyridoxamine 5'-phosphate oxidase (224 aa).

Residues 19–22 (RGEY) and lysine 81 each bind substrate. FMN-binding positions include 76 to 81 (RSVLCK), 91 to 92 (FT), lysine 98, and glutamine 120. Positions 138 and 142 each coordinate substrate. Residues 155–156 (QS) and tryptophan 201 each bind FMN. 207-209 (RMH) lines the substrate pocket. Arginine 211 serves as a coordination point for FMN.

This sequence belongs to the pyridoxamine 5'-phosphate oxidase family. As to quaternary structure, homodimer. FMN is required as a cofactor.

The catalysed reaction is pyridoxamine 5'-phosphate + O2 + H2O = pyridoxal 5'-phosphate + H2O2 + NH4(+). It carries out the reaction pyridoxine 5'-phosphate + O2 = pyridoxal 5'-phosphate + H2O2. Its pathway is cofactor metabolism; pyridoxal 5'-phosphate salvage; pyridoxal 5'-phosphate from pyridoxamine 5'-phosphate: step 1/1. It participates in cofactor metabolism; pyridoxal 5'-phosphate salvage; pyridoxal 5'-phosphate from pyridoxine 5'-phosphate: step 1/1. Its function is as follows. Catalyzes the oxidation of either pyridoxine 5'-phosphate (PNP) or pyridoxamine 5'-phosphate (PMP) into pyridoxal 5'-phosphate (PLP). This Mycobacterium bovis (strain ATCC BAA-935 / AF2122/97) protein is Pyridoxine/pyridoxamine 5'-phosphate oxidase.